A 1016-amino-acid chain; its full sequence is Kinesin-like protein KIN-14K (1016 aa).

Positions 14 to 121 (ADRRAEVIEW…CLLVLRESVS (108 aa)) constitute a Calponin-homology (CH) domain. The segment at 123 to 176 (GLRDGTSKAPLRKKWRVPETGEPLVPGVAQGKTSPGEDKRNGLPDPKSQQKTPI) is disordered. Residues 288 to 354 (VNGTNEENQM…EVMTSMHEQQ (67 aa)) are a coiled coil. Residues 481-808 (NIRVYCRVRP…LKFAERVSGV (328 aa)) enclose the Kinesin motor domain. ATP is bound at residue 565-572 (GQTGSGKT). Positions 820–852 (KDIKELLEQVASLKDTIVRKDTEIEQLQLMKDK) form a coiled coil. Composition is skewed to polar residues over residues 884–893 (NQQSQLSDPQ) and 990–1004 (KTPN…QLIG). Disordered stretches follow at residues 884 to 912 (NQQS…DITP) and 971 to 1016 (LTKN…RWQK).

Belongs to the TRAFAC class myosin-kinesin ATPase superfamily. Kinesin family. KIN-14 subfamily.

This chain is Kinesin-like protein KIN-14K, found in Oryza sativa subsp. japonica (Rice).